A 178-amino-acid chain; its full sequence is Endothelin-2 (178 aa).

Positions 1–24 (MVSVPTTWCSVALALLVALHEGKG) are cleaved as a signal peptide. Residues 25–46 (QAAATLEQPASSSHAQGTHLRL) constitute a propeptide that is removed on maturation. Cystine bridges form between cysteine 49-cysteine 63 and cysteine 51-cysteine 59. The propeptide occupies 70–178 (VNTPEQTAPY…RSTHSRWRKR (109 aa)). The segment at 96 to 111 (CQCSSARDPACATFCL) is endothelin-like. The tract at residues 159–178 (KRQQEAMREPRSTHSRWRKR) is disordered. A compositionally biased stretch (basic and acidic residues) spans 160-170 (RQQEAMREPRS).

Belongs to the endothelin/sarafotoxin family. As to expression, expressed in lung, but not in placental stem villi vessels or cultured placental villi smooth muscle cells.

It localises to the secreted. Endothelins are endothelium-derived vasoconstrictor peptides. This chain is Endothelin-2 (EDN2), found in Homo sapiens (Human).